A 989-amino-acid chain; its full sequence is Autotransporter adhesin/invasin TibA (989 aa).

Positions 1–54 are cleaved as a signal peptide; sequence MNKVYNTVWNESTGTWVVTSELTRKGGLRPRQIKRTVLAGLIAGLLMPSMPALA. O-alpha-linked (D-glycero-D-manno-heptose) serine glycans are attached at residues Ser-74, Ser-86, Ser-93, Ser-94, Ser-97, Ser-100, Ser-112, Ser-113, Ser-116, Ser-119, Ser-124, Ser-131, Ser-132, and Ser-135. 12 tandem repeats follow at residues 82–100, 101–119, 120–138, 139–157, 158–176, 177–195, 196–214, 215–233, 234–251, 252–270, 271–289, and 290–308. Positions 82–308 are 12 X 19 AA approximate repeats; sequence TTINSGGKQY…QVEAGGSASK (227 aa). Over residues 110 to 123 the composition is skewed to polar residues; the sequence is HVSSGGSATSSTIN. A disordered region spans residues 110–146; the sequence is HVSSGGSATSSTINSGGHQHVSSGGSATNTTVNNGGR. The span at 124 to 135 shows a compositional bias: low complexity; sequence SGGHQHVSSGGS. Residues 136 to 146 are compositionally biased toward polar residues; it reads ATNTTVNNGGR. O-alpha-linked (D-glycero-D-manno-heptose) serine glycans are attached at residues Ser-151, Ser-154, Ser-162, Ser-170, Ser-176, Ser-181, Ser-188, Ser-189, Ser-200, Ser-226, Ser-227, Ser-230, Ser-238, Ser-248, Ser-263, Ser-264, Ser-275, Ser-294, Ser-305, Ser-313, and Ser-322. The interval 623 to 686 is disordered; that stretch reads WYLKADTPPP…GTSSSPVRRT (64 aa). The span at 629-638 shows a compositional bias: pro residues; sequence TPPPVTPPTN. A run of 8 repeats spans residues 639–643, 644–648, 649–653, 654–658, 659–663, 664–668, 669–673, and 674–678. The span at 639–667 shows a compositional bias: low complexity; it reads PDADNPDAGNPDAGNPDAGNPDAGNPDAG. Residues 639 to 678 form an 8 X 5 AA repeats of P-[DG]-[AGT]-[DGA]-[NKT] region; the sequence is PDADNPDAGNPDAGNPDAGNPDAGNPDAGKPGTGKPDAGT. In terms of domain architecture, Autotransporter spans 721-989; that stretch reads NTRAPGGVWG…TGGVGFRINF (269 aa).

As to quaternary structure, homohexamer. Post-translationally, glycosylated by TibC. Glycosylation is required for adhesion to and invasion of host cells. Glycosylation is dispensable for bacterial autoaggregation and biofilm formation.

The protein localises to the cell outer membrane. In terms of biological role, mediates both adhesion to and invasion of human intestine epithelial cells. Also mediates bacterial cell aggregation via intercellular TibA-TibA interaction. Enhances biofilm formation. This is Autotransporter adhesin/invasin TibA from Escherichia coli O78:H11 (strain H10407 / ETEC).